We begin with the raw amino-acid sequence, 261 residues long: uncharacterized protein (261 aa).

Isoleucine 33, aspartate 78, and asparagine 105 together coordinate NADP(+). Serine 157 serves as the catalytic Proton donor. The NADP(+) site is built by tyrosine 172, lysine 176, and serine 206. Catalysis depends on tyrosine 172, which acts as the Proton acceptor. Lysine 176 (lowers pKa of active site Tyr) is an active-site residue.

This sequence belongs to the short-chain dehydrogenases/reductases (SDR) family.

It is found in the cytoplasm. Its subcellular location is the nucleus. This is an uncharacterized protein from Schizosaccharomyces pombe (strain 972 / ATCC 24843) (Fission yeast).